A 282-amino-acid chain; its full sequence is 3-oxoadipate CoA-transferase subunit A (282 aa).

The protein belongs to the 3-oxoacid CoA-transferase subunit A family. In terms of assembly, heterotetramer composed of 2 A and 2 B subunits.

The enzyme catalyses 3-oxoadipate + succinyl-CoA = 3-oxoadipyl-CoA + succinate. It functions in the pathway aromatic compound metabolism; beta-ketoadipate pathway; acetyl-CoA and succinyl-CoA from 3-oxoadipate: step 1/2. Functionally, catalyzes the CoA transfer from succinate to 3-oxoadipate (beta-ketoadipate). The protein is 3-oxoadipate CoA-transferase subunit A (catI) of Pseudomonas knackmussii (strain DSM 6978 / CCUG 54928 / LMG 23759 / B13).